Here is a 312-residue protein sequence, read N- to C-terminus: Pantothenate kinase (312 aa).

97–104 is a binding site for ATP; that stretch reads GSVAVGKS.

This sequence belongs to the prokaryotic pantothenate kinase family.

It is found in the cytoplasm. The catalysed reaction is (R)-pantothenate + ATP = (R)-4'-phosphopantothenate + ADP + H(+). Its pathway is cofactor biosynthesis; coenzyme A biosynthesis; CoA from (R)-pantothenate: step 1/5. The polypeptide is Pantothenate kinase (Mycobacterium bovis (strain BCG / Pasteur 1173P2)).